The chain runs to 60 residues: Large ribosomal subunit protein bL32 (60 aa).

A disordered region spans residues 1–23; the sequence is MAVPRNRHSNARKNIRRSHHAKQ.

Belongs to the bacterial ribosomal protein bL32 family.

The protein is Large ribosomal subunit protein bL32 of Chlamydia abortus (strain DSM 27085 / S26/3) (Chlamydophila abortus).